Reading from the N-terminus, the 371-residue chain is Flagellar P-ring protein (371 aa).

The signal sequence occupies residues 1-25 (MTMRVCKWLLTFALLFAATLTPAHS).

The protein belongs to the FlgI family. The basal body constitutes a major portion of the flagellar organelle and consists of four rings (L,P,S, and M) mounted on a central rod.

Its subcellular location is the periplasm. The protein resides in the bacterial flagellum basal body. Assembles around the rod to form the L-ring and probably protects the motor/basal body from shearing forces during rotation. The chain is Flagellar P-ring protein from Sinorhizobium fredii (strain NBRC 101917 / NGR234).